The sequence spans 104 residues: Large ribosomal subunit protein uL24 (104 aa).

This sequence belongs to the universal ribosomal protein uL24 family. In terms of assembly, part of the 50S ribosomal subunit.

Functionally, one of two assembly initiator proteins, it binds directly to the 5'-end of the 23S rRNA, where it nucleates assembly of the 50S subunit. Its function is as follows. One of the proteins that surrounds the polypeptide exit tunnel on the outside of the subunit. The chain is Large ribosomal subunit protein uL24 from Ectopseudomonas mendocina (strain ymp) (Pseudomonas mendocina).